The chain runs to 181 residues: Adenine phosphoribosyltransferase (181 aa).

The protein belongs to the purine/pyrimidine phosphoribosyltransferase family. In terms of assembly, homodimer.

The protein localises to the cytoplasm. The enzyme catalyses AMP + diphosphate = 5-phospho-alpha-D-ribose 1-diphosphate + adenine. Its pathway is purine metabolism; AMP biosynthesis via salvage pathway; AMP from adenine: step 1/1. Catalyzes a salvage reaction resulting in the formation of AMP, that is energically less costly than de novo synthesis. The chain is Adenine phosphoribosyltransferase from Methylobacterium nodulans (strain LMG 21967 / CNCM I-2342 / ORS 2060).